Consider the following 640-residue polypeptide: MLVVTLPDGSKREFEAPVRVADVAQSIGSGLAKAALGGIVDGKMVDTSFVIDKDSQLAIITDKSPEALEIVRHSTAHLLAYAVKELFPEAQVTIGPVIENGFYYDFSYHRPFTPDDLVALEKKMTELAKRDEPVTRTVMPRDEAVEFFKKQGENYKAELIASIPQGEDVSLYAEGKFTDLCRGPHVPSTGKLKVFKLMKLAGAYWRGDSKNEMLQRIYGTTWLRKEDQDAYLHMLEESEKRDHRRLGKQLDLFHFQEEAPGLIFWHPKGWSIWQEVEQYMRRVYQQEGYQEVKAPQILDRGLWEKSGHWENYKENMFTTESENRAYALKPMNCPGHVQIYNSGLHSYRELPLRFGEFGQCHRNEPSGALHGLMRVRGFTQDDGHIFCTEDQIQSEVAAFDKAVRAVYQDFGFTEVAVKLALRPAKRVGDDAIWDKAEEALRGALKASGQEWEELPGEGAFYGPKIEYHLKDSIGRTWQCGTIQVDFSMPARLGAEYVAENNSRKTPVMLHRAIVGSLERFIGILIENHTGNMPVWLAPTQAVVLNISGNSAAYAQQVQQLLKKQGFRIESDLRNEKITYKIREYALQKTPFLLIVGDKESESNTVAVRARGGVDLGVMPLDAFVARLQQDISQKVGPEPS.

A TGS domain is found at 1-61 (MLVVTLPDGS…DKDSQLAIIT (61 aa)). Residues 242–533 (DHRRLGKQLD…LIENHTGNMP (292 aa)) are catalytic. Cys-333, His-384, and His-510 together coordinate Zn(2+).

The protein belongs to the class-II aminoacyl-tRNA synthetase family. As to quaternary structure, homodimer. Zn(2+) is required as a cofactor.

The protein resides in the cytoplasm. It carries out the reaction tRNA(Thr) + L-threonine + ATP = L-threonyl-tRNA(Thr) + AMP + diphosphate + H(+). Catalyzes the attachment of threonine to tRNA(Thr) in a two-step reaction: L-threonine is first activated by ATP to form Thr-AMP and then transferred to the acceptor end of tRNA(Thr). Also edits incorrectly charged L-seryl-tRNA(Thr). This is Threonine--tRNA ligase from Polynucleobacter necessarius subsp. necessarius (strain STIR1).